The chain runs to 118 residues: Large ribosomal subunit protein bL19 (118 aa).

This sequence belongs to the bacterial ribosomal protein bL19 family.

Its function is as follows. This protein is located at the 30S-50S ribosomal subunit interface and may play a role in the structure and function of the aminoacyl-tRNA binding site. The chain is Large ribosomal subunit protein bL19 from Geobacter metallireducens (strain ATCC 53774 / DSM 7210 / GS-15).